We begin with the raw amino-acid sequence, 412 residues long: DNA replication and repair protein RecF (412 aa).

ATP is bound at residue 30-37; the sequence is GKNGLGKT.

The protein belongs to the RecF family.

It is found in the cytoplasm. The RecF protein is involved in DNA metabolism; it is required for DNA replication and normal SOS inducibility. RecF binds preferentially to single-stranded, linear DNA. It also seems to bind ATP. The polypeptide is DNA replication and repair protein RecF (Bifidobacterium longum subsp. infantis (strain ATCC 15697 / DSM 20088 / JCM 1222 / NCTC 11817 / S12)).